The chain runs to 322 residues: ATP-dependent 6-phosphofructokinase (322 aa).

G11 contacts ATP. 21 to 25 is a binding site for ADP; sequence RAVTR. Residues 72 to 73 and 102 to 105 contribute to the ATP site; these read RC and GDGS. Residue D103 participates in Mg(2+) binding. 127-129 is a substrate binding site; that stretch reads TID. The Proton acceptor role is filled by D129. ADP is bound at residue R156. Substrate-binding positions include R164 and 171–173; that span reads MGR. Residues 187 to 189, R213, and 215 to 217 contribute to the ADP site; these read GAE and KKH. Substrate-binding positions include E224, R245, and 251–254; that span reads HIQR.

Belongs to the phosphofructokinase type A (PFKA) family. ATP-dependent PFK group I subfamily. Prokaryotic clade 'B1' sub-subfamily. In terms of assembly, homotetramer. Requires Mg(2+) as cofactor.

It localises to the cytoplasm. It catalyses the reaction beta-D-fructose 6-phosphate + ATP = beta-D-fructose 1,6-bisphosphate + ADP + H(+). The protein operates within carbohydrate degradation; glycolysis; D-glyceraldehyde 3-phosphate and glycerone phosphate from D-glucose: step 3/4. With respect to regulation, allosterically activated by ADP and other diphosphonucleosides, and allosterically inhibited by phosphoenolpyruvate. Its function is as follows. Catalyzes the phosphorylation of D-fructose 6-phosphate to fructose 1,6-bisphosphate by ATP, the first committing step of glycolysis. This Staphylococcus epidermidis (strain ATCC 35984 / DSM 28319 / BCRC 17069 / CCUG 31568 / BM 3577 / RP62A) protein is ATP-dependent 6-phosphofructokinase.